We begin with the raw amino-acid sequence, 548 residues long: Chaperonin GroEL (548 aa).

Residues 30–33 (TLGP), lysine 51, 87–91 (DGTTT), glycine 415, and 479–481 (NAV) contribute to the ATP site.

It belongs to the chaperonin (HSP60) family. As to quaternary structure, forms a cylinder of 14 subunits composed of two heptameric rings stacked back-to-back. Interacts with the co-chaperonin GroES.

Its subcellular location is the cytoplasm. The catalysed reaction is ATP + H2O + a folded polypeptide = ADP + phosphate + an unfolded polypeptide.. Functionally, together with its co-chaperonin GroES, plays an essential role in assisting protein folding. The GroEL-GroES system forms a nano-cage that allows encapsulation of the non-native substrate proteins and provides a physical environment optimized to promote and accelerate protein folding. This chain is Chaperonin GroEL, found in Stenotrophomonas maltophilia (Pseudomonas maltophilia).